A 262-amino-acid chain; its full sequence is Phosphate import ATP-binding protein PstB (262 aa).

The ABC transporter domain occupies 16-257 (IDVRNLNFYY…PHRKETEDYI (242 aa)). ATP is bound at residue 48 to 55 (GPSGCGKS).

Belongs to the ABC transporter superfamily. Phosphate importer (TC 3.A.1.7) family. In terms of assembly, the complex is composed of two ATP-binding proteins (PstB), two transmembrane proteins (PstC and PstA) and a solute-binding protein (PstS).

The protein resides in the cell inner membrane. It catalyses the reaction phosphate(out) + ATP + H2O = ADP + 2 phosphate(in) + H(+). Functionally, part of the ABC transporter complex PstSACB involved in phosphate import. Responsible for energy coupling to the transport system. The chain is Phosphate import ATP-binding protein PstB from Cupriavidus metallidurans (strain ATCC 43123 / DSM 2839 / NBRC 102507 / CH34) (Ralstonia metallidurans).